The sequence spans 376 residues: Lysocardiolipin acyltransferase 1 (376 aa).

Residues 9 to 29 (FILFLFAGSFFGSIFMLGPIL) traverse the membrane as a helical segment. An N-linked (GlcNAc...) asparagine glycan is attached at Asn35. The chain crosses the membrane as a helical span at residues 48–68 (ATWLTLPVALLETMFGVRVVI). An HXXXXD motif motif is present at residues 85 to 90 (HRTRVD). Lys183 is subject to N6-acetyllysine. Helical transmembrane passes span 309–329 (LLSIVYWALFCSAMCLLIYLY) and 336–356 (FIISIVFFVLQERIFGGLEII).

It belongs to the 1-acyl-sn-glycerol-3-phosphate acyltransferase family. Widely expressed with highest expression in heart, liver and 12.5 dpc aorta-gonad-mesonephros and lower levels in the 16 dpc fetal liver and adult bone marrow. In bone marrow, highest levels are found in B-cells compared with whole bone marrow, T-cells, erythrocytes, and granulocytes.

Its subcellular location is the endoplasmic reticulum membrane. The catalysed reaction is a 1-acyl-sn-glycero-3-phosphate + an acyl-CoA = a 1,2-diacyl-sn-glycero-3-phosphate + CoA. It catalyses the reaction a 1-acyl-sn-glycero-3-phospho-(1D-myo-inositol) + an acyl-CoA = a 1,2-diacyl-sn-glycero-3-phospho-(1D-myo-inositol) + CoA. The enzyme catalyses 1-acyl-sn-glycero-3-phospho-(1'-sn-glycerol) + an acyl-CoA = a 1,2-diacyl-sn-glycero-3-phospho-(1'-sn-glycerol) + CoA. It carries out the reaction 1-hexadecanoyl-sn-glycero-3-phosphate + (9Z)-octadecenoyl-CoA = 1-hexadecanoyl-2-(9Z-octadecenoyl)-sn-glycero-3-phosphate + CoA. The catalysed reaction is 1-(9Z-octadecenoyl)-sn-glycero-3-phosphate + (9Z)-octadecenoyl-CoA = 1,2-di-(9Z-octadecenoyl)-sn-glycero-3-phosphate + CoA. It catalyses the reaction 1-(9Z,12Z)-octadecadienoyl-sn-glycero-3-phosphate + (9Z)-octadecenoyl-CoA = 1-(9Z,12Z)-octadecadienoyl-2-(9Z)-octadecenoyl-sn-glycero-3-phosphate + CoA. The enzyme catalyses 1-(9Z,12Z,15Z)-octadecatrienoyl-sn-glycero-3-phosphate + (9Z)-octadecenoyl-CoA = 1-(9Z,12Z,15Z)-octadecatrienoyl-2-(9Z)-octadecenoyl-sn-glycero-3-phosphate + CoA. It carries out the reaction 1-(9Z-octadecenoyl)-sn-glycero-3-phosphate + hexadecanoyl-CoA = 1-(9Z)-octadecenoyl-2-hexadecanoyl-sn-glycero-3-phosphate + CoA. The catalysed reaction is 1-(9Z-octadecenoyl)-sn-glycero-3-phosphate + octadecanoyl-CoA = 1-(9Z-octadecenoyl)-2-octadecanoyl-sn-glycero-3-phosphate + CoA. It catalyses the reaction 1-acyl-sn-glycero-3-phospho-(1'-sn-glycerol) + (9Z)-octadecenoyl-CoA = 1-acyl-2-(9Z-octadecenoyl)-sn-glycero-3-phospho-(1'-sn-glycerol) + CoA. The enzyme catalyses a 1-acyl-sn-glycero-3-phospho-(1D-myo-inositol) + (9Z)-octadecenoyl-CoA = a 1-acyl-2-(9Z-octadecenoyl)-sn-glycero-3-phospho-(1D-myo-inositol) + CoA. It carries out the reaction 1-hexadecanoyl-sn-glycero-3-phospho-(1D-myo-inositol) + hexadecanoyl-CoA = 1,2-dihexadecanoyl-sn-glycero-3-phospho-(1D-myo-inositol) + CoA. The catalysed reaction is 1-hexadecanoyl-sn-glycero-3-phospho-(1D-myo-inositol) + octadecanoyl-CoA = 1-hexadecanoyl-2-octadecanoyl-sn-glycero-3-phospho-(1D-myo-inositol) + CoA. It catalyses the reaction 1-hexadecanoyl-sn-glycero-3-phospho-(1D-myo-inositol) + (9Z)-octadecenoyl-CoA = 1-hexadecanoyl-2-(9Z-octadecenoyl)-sn-glycero-3-phospho-(1D-myo-inositol) + CoA. The enzyme catalyses 1-hexadecanoyl-sn-glycero-3-phospho-(1D-myo-inositol) + (9Z,12Z)-octadecadienoyl-CoA = 1-hexadecanoyl-2-(9Z,12Z-octadecadienoyl)-sn-glycero-3-phospho-(1D-myo-inositol) + CoA. It carries out the reaction 1-hexadecanoyl-sn-glycero-3-phospho-(1D-myo-inositol) + (5Z,8Z,11Z,14Z)-eicosatetraenoyl-CoA = 1-hexadecanoyl-2-(5Z,8Z,11Z,14Z-eicosatetraenoyl)-sn-glycero-3-phospho-D-myo-inositol + CoA. The catalysed reaction is 1-hexadecanoyl-sn-glycero-3-phospho-(1'-sn-glycerol) + hexadecanoyl-CoA = 1,2-dihexadecanoyl-sn-glycero-3-phospho-(1'-sn-glycerol) + CoA. It catalyses the reaction 1-hexadecanoyl-sn-glycero-3-phospho-(1'-sn-glycerol) + octadecanoyl-CoA = 1-hexadecanoyl-2-octadecanoyl-sn-glycero-3-phospho-(1'-sn-glycerol) + CoA. The enzyme catalyses 1-hexadecanoyl-sn-glycero-3-phospho-(1'-sn-glycerol) + (9Z)-octadecenoyl-CoA = 1-hexadecanoyl-2-(9Z-octadecenoyl)-sn-glycero-3-phospho-(1'-sn-glycerol) + CoA. It carries out the reaction 1-hexadecanoyl-sn-glycero-3-phospho-(1'-sn-glycerol) + (9Z,12Z)-octadecadienoyl-CoA = 1-hexadecanoyl-2-(9Z,12Z-octadecadienoyl)-sn-glycero-3-phospho-(1'-sn-glycerol) + CoA. The catalysed reaction is 1-tetradecanoyl-sn-glycero-3-phospho-(1'-sn-glycerol) + (9Z)-octadecenoyl-CoA = 1-tetradecanoyl-2-(9Z-octadecenoyl)-sn-glycero-3-phospho-(1'-sn-glycerol) + CoA. It catalyses the reaction 1-octadecanoyl-sn-glycero-3-phospho-(1'-sn-glycerol) + (9Z)-octadecenoyl-CoA = 1-octadecanoyl-2-(9Z-octadecenoyl)-sn-glycero-3-phospho-(1'-sn-glycerol) + CoA. The enzyme catalyses 1-(9Z-octadecenoyl)-sn-glycero-3-phospho-(1'-sn-glycerol) + (9Z)-octadecenoyl-CoA = 1,2-di-(9Z-octadecenoyl)-sn-glycero-3-phospho-(1'-sn-glycerol) + CoA. It carries out the reaction 1-hexadecanoyl-sn-glycero-3-phospho-(1D-myo-inositol) + dodecanoyl-CoA = 1-hexadecanoyl-2-dodecanoyl-sn-glycero-3-phospho-(1D-myo-inositol) + CoA. The catalysed reaction is 1',3'-bis-[1-acyl-sn-glycero-3-phospho]-glycerol + (9Z)-octadecenoyl-CoA = 1'-[1-acyl-2-(9Z)-octadecenoyl-sn-glycero-3-phospho],3'-[1-acyl,2-hydroxy-sn-glycero-3-phospho]-glycerol + CoA. It catalyses the reaction 1'-[1,2-diacyl-sn-glycero-3-phospho],3'-[1-acyl-sn-glycero-3-phospho]-glycerol + (9Z)-octadecenoyl-CoA = 1'-[1,2-diacyl-sn-glycero-3-phospho],3'-[1-acyl,2-(9Z)-octadecenoyl-sn-glycero-3-phospho]-glycerol + CoA. The enzyme catalyses 1'-[1,2-diacyl-sn-glycero-3-phospho],3'-[1-acyl-sn-glycero-3-phospho]-glycerol + (9Z,12Z)-octadecadienoyl-CoA = 1'-[1,2-diacyl-sn-glycero-3-phospho],3'-[1-acyl,2-(9Z,12Z)-octadecadienoyl-sn-glycero-3-phospho]-glycerol + CoA. It carries out the reaction 1'-[1,2-diacyl-sn-glycero-3-phospho],3'-[1-acyl-sn-glycero-3-phospho]-glycerol + dodecanoyl-CoA = 1'-[1,2-diacyl-sn-glycero-3-phospho],3'-[1-acyl,2-dodecanoyl-sn-glycero-3-phospho]-glycerol + CoA. The catalysed reaction is 1',3'-bis-[1-acyl-sn-glycero-3-phospho]-glycerol + dodecanoyl-CoA = 1'-[1-acyl-2-dodecanoyl-sn-glycero-3-phospho],3'-[1-acyl,2-hydroxy-sn-glycero-3-phospho]-glycerol + CoA. It catalyses the reaction a 1-acyl-sn-glycero-3-phosphate + (9Z)-octadecenoyl-CoA = a 1-acyl-2-(9Z-octadecenoyl)-sn-glycero-3-phosphate + CoA. The enzyme catalyses 1',3'-bis-[1-acyl-sn-glycero-3-phospho]-glycerol + (9Z,12Z)-octadecadienoyl-CoA = 1'-[1-acyl-2-(9Z,12Z)-octadecadienoyl-sn-glycero-3-phospho],3'-[1-acyl,2-hydroxy-sn-glycero-3-phospho]-glycerol + CoA. It carries out the reaction 1',3'-bis-[1-acyl-sn-glycero-3-phospho]-glycerol + hexadecanoyl-CoA = 1'-[1-acyl-2-hexadecanoyl-sn-glycero-3-phospho],3'-[1-acyl,2-hydroxy-sn-glycero-3-phospho]-glycerol + CoA. The catalysed reaction is 1',3'-bis-[1-acyl-sn-glycero-3-phospho]-glycerol + octadecanoyl-CoA = 1'-[1-acyl-2-octadecanoyl-sn-glycero-3-phospho],3'-[1-acyl,2-hydroxy-sn-glycero-3-phospho]-glycerol + CoA. It catalyses the reaction 1'-[1,2-diacyl-sn-glycero-3-phospho],3'-[1-acyl-sn-glycero-3-phospho]-glycerol + octanoyl-CoA = 1'-[1,2-diacyl-sn-glycero-3-phospho],3'-[1-acyl,2-octanoyl-sn-glycero-3-phospho]-glycerol + CoA. The enzyme catalyses 1',3'-bis-[1-acyl-sn-glycero-3-phospho]-glycerol + octanoyl-CoA = 1'-[1-acyl-2-octanoyl-sn-glycero-3-phospho],3'-[1-acyl,2-hydroxy-sn-glycero-3-phospho]-glycerol + CoA. It carries out the reaction 1'-[1,2-diacyl-sn-glycero-3-phospho],3'-[1-acyl-sn-glycero-3-phospho]-glycerol + hexadecanoyl-CoA = 1'-[1,2-diacyl-sn-glycero-3-phospho],3'-[1-acyl,2-hexadecanoyl-sn-glycero-3-phospho]-glycerol + CoA. The catalysed reaction is 1'-[1,2-diacyl-sn-glycero-3-phospho],3'-[1-acyl-sn-glycero-3-phospho]-glycerol + (5Z,8Z,11Z,14Z)-eicosatetraenoyl-CoA = 1'-[1,2-diacyl-sn-glycero-3-phospho],3'-[1-acyl,2-(5Z,8Z,11Z,14Z)-eicosatetraenoyl-sn-glycero-3-phospho]-glycerol + CoA. It catalyses the reaction 1',3'-bis-[1-acyl-sn-glycero-3-phospho]-glycerol + (5Z,8Z,11Z,14Z)-eicosatetraenoyl-CoA = 1'-[1-acyl-2-(5Z,8Z,11Z,14Z)-eicosatetraenoyl-sn-glycero-3-phospho],3'-[1-acyl,2-hydroxy-sn-glycero-3-phospho]-glycerol + CoA. The enzyme catalyses a 1-acyl-sn-glycero-3-phospho-(1D-myo-inositol) + octadecanoyl-CoA = a 1-acyl-2-octadecanoyl-sn-glycero-3-phospho-(1D-myo-inositol) + CoA. It carries out the reaction a 2-acyl-sn-glycero-3-phospho-D-myo-inositol + octadecanoyl-CoA = 1-octadecanoyl-2-acyl-sn-glycero-3-phospho-1D-myo-inositol + CoA. It participates in phospholipid metabolism; CDP-diacylglycerol biosynthesis; CDP-diacylglycerol from sn-glycerol 3-phosphate: step 2/3. Functionally, exhibits acyl-CoA:lysocardiolipin acyltransferase (ALCAT) activity; catalyzes the reacylation of lyso-cardiolipin to cardiolipin (CL), a key step in CL remodeling. Recognizes both monolysocardiolipin and dilysocardiolipin as substrates with a preference for linoleoyl-CoA and oleoyl-CoA as acyl donors. Also exhibits 1-acyl-sn-glycerol-3-phosphate acyltransferase activity (AGPAT) activity; converts 1-acyl-sn-glycerol-3- phosphate (lysophosphatidic acid or LPA) into 1,2-diacyl-sn-glycerol-3- phosphate (phosphatidic acid or PA) by incorporating an acyl moiety at the sn-2 position of the glycerol backbone. Possesses lysophosphatidylinositol acyltransferase (LPIAT) activity. Possesses lysophosphatidylglycerol acyltransferase (LPGAT) activity. Required for establishment of the hematopoietic and endothelial lineages. This chain is Lysocardiolipin acyltransferase 1 (Lclat1), found in Mus musculus (Mouse).